A 345-amino-acid polypeptide reads, in one-letter code: KRR1 small subunit processome component homolog (345 aa).

In terms of domain architecture, KH spans 125-193 (DIIKIGNLVH…VRDIVLETMN (69 aa)). The segment covering 232 to 245 (NISKRKQPKVKKQK) has biased composition (basic residues). Disordered regions lie at residues 232–260 (NISK…ESKV) and 273–345 (QEQK…ARSS). Positions 270 to 298 (FLNQEQKQAKRNQERTEKQKEAAKRQDER) form a coiled coil. 2 stretches are compositionally biased toward basic and acidic residues: residues 276–302 (KQAK…RNKD) and 315–330 (RKKE…DVKA). Residues 331 to 345 (LKAKLIKANKKARSS) are compositionally biased toward basic residues.

It belongs to the KRR1 family. Monomer. Component of the ribosomal small subunit (SSU) processome.

It localises to the nucleus. Its subcellular location is the nucleolus. In terms of biological role, required for 40S ribosome biogenesis. Involved in nucleolar processing of pre-18S ribosomal RNA and ribosome assembly. Binds to RNA. Required for female germline development, cell viability during eye development and for survival of dividing cells and epithelial cells during early wing disk development. In Drosophila melanogaster (Fruit fly), this protein is KRR1 small subunit processome component homolog (dbe).